The following is an 83-amino-acid chain: uncharacterized protein (83 aa).

This is an uncharacterized protein from Escherichia coli (strain K12).